The following is a 332-amino-acid chain: Ribosomal RNA small subunit methyltransferase C (332 aa).

The protein belongs to the methyltransferase superfamily. RsmC family. As to quaternary structure, monomer.

The protein resides in the cytoplasm. The catalysed reaction is guanosine(1207) in 16S rRNA + S-adenosyl-L-methionine = N(2)-methylguanosine(1207) in 16S rRNA + S-adenosyl-L-homocysteine + H(+). Specifically methylates the guanine in position 1207 of 16S rRNA in the 30S particle. The polypeptide is Ribosomal RNA small subunit methyltransferase C (Pseudomonas syringae pv. tomato (strain ATCC BAA-871 / DC3000)).